Reading from the N-terminus, the 580-residue chain is Mucolipin-1 (580 aa).

The segment at 1 to 38 (MTAPAGPRGSETERLLTPNPGYGTQAGPSPAPPTPPEE) is disordered. Residues 1-65 (MTAPAGPRGS…FRAKGRKPCK (65 aa)) are Cytoplasmic-facing. At serine 10 the chain carries Phosphoserine. The Dileucine motif; mediates targeting to lysosomes motif lies at 11-16 (ETERLL). The interaction with phosphoinositides stretch occupies residues 42-62 (RRRLKYFFMSPCDKFRAKGRK). Residues 66–86 (LMLQVVKILVVTVQLILFGLS) form a helical membrane-spanning segment. Residues 87-298 (NQLAVTFREE…VFQHGDNSFR (212 aa)) are Extracellular-facing. The tract at residues 107–121 (LGYSDGADDTFAAYT) is extracellular/lumenal pore loop. A disulfide bridge connects residues cysteine 166 and cysteine 192. Asparagine 230 carries an N-linked (GlcNAc...) asparagine glycan. Cysteines 253 and 284 form a disulfide. Residues 299 to 321 (LLFDVVVILTCSLSFLLCARSLL) traverse the membrane as a helical segment. Topologically, residues 322 to 350 (RGFLLQNEFVGFMWRQRGRVISLWERLEF) are cytoplasmic. A helical transmembrane segment spans residues 351-371 (VNGWYILLVTSDVLTISGTIM). The Extracellular portion of the chain corresponds to 372–382 (KIGIEAKNLAS). A helical transmembrane segment spans residues 383-405 (YDVCSILLGTSTLLVWVGVIRYL). Residues 406–427 (TFFHNYNILIATLRVALPSVMR) are Cytoplasmic-facing. The chain crosses the membrane as a helical span at residues 428–448 (FCCCVAVIYLGYCFCGWIVLG). The Extracellular portion of the chain corresponds to 449–456 (PYHVKFRS). An intramembrane region (pore-forming) is located at residues 457–477 (LSMVSECLFSLINGDDMFVTF). The Selectivity filter signature appears at 469–474 (NGDDMF). Over 478 to 491 (AAMQAQQGRSSLVW) the chain is Extracellular. A helical membrane pass occupies residues 492–513 (LFSQLYLYSFISLFIYMVLSLF). The Cytoplasmic segment spans residues 514–580 (IALITGAYDT…PSEEHSLLVN (67 aa)). Residues serine 557 and serine 559 each carry the phosphoserine; by PAK modification. Residues 565 to 567 (CCC) form a required for palmitoylation and association with membranes region. A Dileucine internalization motif; mediates AP2 complex-dependent internalization motif is present at residues 573–578 (EEHSLL).

It belongs to the transient receptor (TC 1.A.4) family. Polycystin subfamily. MCOLN1 sub-subfamily. In terms of assembly, homotetramer. Homooligomer. Can heterooligomerize with MCOLN2 or MCOLN3; heteromeric assemblies have different channel properties as compared to the respective homooligomers and may be tissue-specific. Interacts with PDCD6. Interacts with TMEM163. Interacts with LAPTM4B. In terms of processing, palmitoylated; involved in association with membranes. Phosphorylation by PKA inhibits channel activity. Dephosphorylation increases activity. Post-translationally, proteolytically cleaved probably involving multiple lysosomal proteases including cathepsin B; inhibits lysosomal channel activity. Widely expressed in adult and fetal tissues.

The protein localises to the late endosome membrane. The protein resides in the lysosome membrane. It localises to the cytoplasmic vesicle membrane. It is found in the cell projection. Its subcellular location is the phagocytic cup. The protein localises to the cytoplasmic vesicle. The protein resides in the phagosome membrane. It localises to the cell membrane. It carries out the reaction Ca(2+)(in) = Ca(2+)(out). The catalysed reaction is Fe(2+)(in) = Fe(2+)(out). It catalyses the reaction Mg(2+)(in) = Mg(2+)(out). The enzyme catalyses K(+)(in) = K(+)(out). It carries out the reaction Na(+)(in) = Na(+)(out). Channel activity is controlled by multiple regulatory mechanisms in different subcellular compartments. Channel function is transiently modulated by changes in Ca(2+) in a pH-dependent manner; pH changes modify the aggregation state of unitary channels; a negative cooperativity between extracellular/lumenal Ca(2+) and H(+) is suggested. Regulated by phosphoinositides in a compartment-specific manner: in lysosomes activated by PtdIns(3,5)P2 (Phosphatidylinositol 3,5-bisphosphate) and at the plasma membrane inhibited by PtdIns(4,5)P2 (Phosphatidylinositol 4,5-bisphosphate). In terms of biological role, nonselective cation channel probably playing a role in the regulation of membrane trafficking events and of metal homeostasis. Acts as a Ca(2+)-permeable cation channel with inwardly rectifying activity. Proposed to play a major role in Ca(2+) release from late endosome and lysosome vesicles to the cytoplasm, which is important for many lysosome-dependent cellular events, including the fusion and trafficking of these organelles, exocytosis and autophagy. Required for efficient uptake of large particles in macrophages in which Ca(2+) release from the lysosomes triggers lysosomal exocytosis. May also play a role in phagosome-lysosome fusion. Involved in lactosylceramide trafficking indicative for a role in the regulation of late endocytic membrane fusion/fission events. By mediating lysosomal Ca(2+) release is involved in regulation of mTORC1 signaling and in mTOR/TFEB-dependent lysosomal adaptation to environmental cues such as nutrient levels. Seems to act as lysosomal active oxygen species (ROS) sensor involved in ROS-induced TFEB activation and autophagy. Also functions as a Fe(2+) permeable channel in late endosomes and lysosomes. Also permeable to Mg(2+), Na(+). K(+) and Cs(+). Proposed to play a role in zinc homeostasis probably implicating its association with TMEM163 In adaptive immunity, TRPML2 and TRPML1 may play redundant roles in the function of the specialized lysosomes of B cells. May contribute to cellular lipase activity within the late endosomal pathway or at the cell surface which may be involved in processes of membrane reshaping and vesiculation, especially the growth of tubular structures. However, it is not known, whether it conveys the enzymatic activity directly, or merely facilitates the activity of an associated phospholipase. In Homo sapiens (Human), this protein is Mucolipin-1.